Consider the following 137-residue polypeptide: Small ribosomal subunit protein uS12 (137 aa).

The segment at 1 to 57 is disordered; it reads MPTINQLVRKPRKSKVEKSKSPALNVGYNSHKKVQTNVSSPQKRGVATRVGTMTPKK. The residue at position 102 (aspartate 102) is a 3-methylthioaspartic acid.

This sequence belongs to the universal ribosomal protein uS12 family. In terms of assembly, part of the 30S ribosomal subunit. Contacts proteins S8 and S17. May interact with IF1 in the 30S initiation complex.

Functionally, with S4 and S5 plays an important role in translational accuracy. In terms of biological role, interacts with and stabilizes bases of the 16S rRNA that are involved in tRNA selection in the A site and with the mRNA backbone. Located at the interface of the 30S and 50S subunits, it traverses the body of the 30S subunit contacting proteins on the other side and probably holding the rRNA structure together. The combined cluster of proteins S8, S12 and S17 appears to hold together the shoulder and platform of the 30S subunit. The polypeptide is Small ribosomal subunit protein uS12 (Streptococcus pneumoniae serotype 2 (strain D39 / NCTC 7466)).